Consider the following 502-residue polypeptide: Dynein regulatory complex subunit 2 (502 aa).

Coiled coils occupy residues D96–I160 and E252–E285.

Belongs to the DRC2 family. Component of the nexin-dynein regulatory complex (N-DRC). Interacts with DRC1.

The protein localises to the cytoplasm. It localises to the cytoskeleton. The protein resides in the flagellum basal body. Its subcellular location is the cell projection. It is found in the cilium. The protein localises to the flagellum. It localises to the flagellum axoneme. Its function is as follows. Component of the nexin-dynein regulatory complex (N-DRC), a key regulator of ciliary/flagellar motility which maintains the alignment and integrity of the distal axoneme and regulates microtubule sliding in motile axonemes. Plays a critical role in the assembly of N-DRC and also stabilizes the assembly of multiple inner dynein arms and radial spokes. Coassembles with DRC1 to form a central scaffold needed for assembly of the N-DRC and its attachment to the outer doublet microtubules. This Rattus norvegicus (Rat) protein is Dynein regulatory complex subunit 2 (Ccdc65).